Consider the following 190-residue polypeptide: 3-isopropylmalate dehydratase small subunit (190 aa).

It belongs to the LeuD family. LeuD type 1 subfamily. In terms of assembly, heterodimer of LeuC and LeuD.

It carries out the reaction (2R,3S)-3-isopropylmalate = (2S)-2-isopropylmalate. It functions in the pathway amino-acid biosynthesis; L-leucine biosynthesis; L-leucine from 3-methyl-2-oxobutanoate: step 2/4. In terms of biological role, catalyzes the isomerization between 2-isopropylmalate and 3-isopropylmalate, via the formation of 2-isopropylmaleate. The protein is 3-isopropylmalate dehydratase small subunit of Staphylococcus aureus (strain USA300).